Reading from the N-terminus, the 450-residue chain is MKATKITYKKDPMGLTPAQIVNELNRFIVGQEKAKKAVAIALRNRCRRKRVEGNLRNEIVPKNILMIGSTGVGKTEIARRLAKLTNSPFYKIEATKFTEVGYVGRDVESIIRDLVEIAVNTEKTLAKTEVDINAREKAIERILDSLVGKTSSSETREKFKEKVLNGELNDTEIEISVADTAPIGGGSFEIPGMPGSSMGVLNLGDMIGRALGSSKTKTKKMLVKEAMAIIIPEELEKLIDQEKIIQQAITLAENDGIVFIDEIDKIASAPSSGAKNAEISREGVQRDLLPLIEGTTVNTKYGQVKTDHILFIASGAFHIAKPSDLLPELQGRLPIRVELNSLTKDDMIKILLEPETSLIKQYSALIGTEDVHLEFTASAIEKIADYAITVNLEVEDIGARRLHTILENLLEDISFEASEMKGKKITIDDQFVENQLSKIITNLDLAKFIL.

ATP contacts are provided by residues valine 29, 71 to 76 (GVGKTE), aspartate 261, glutamate 328, and arginine 400.

Belongs to the ClpX chaperone family. HslU subfamily. A double ring-shaped homohexamer of HslV is capped on each side by a ring-shaped HslU homohexamer. The assembly of the HslU/HslV complex is dependent on binding of ATP.

The protein localises to the cytoplasm. In terms of biological role, ATPase subunit of a proteasome-like degradation complex; this subunit has chaperone activity. The binding of ATP and its subsequent hydrolysis by HslU are essential for unfolding of protein substrates subsequently hydrolyzed by HslV. HslU recognizes the N-terminal part of its protein substrates and unfolds these before they are guided to HslV for hydrolysis. The protein is ATP-dependent protease ATPase subunit HslU of Rickettsia canadensis (strain McKiel).